The following is a 77-amino-acid chain: UPF0337 protein CE0198 (77 aa).

A disordered region spans residues Met1 to Asn77. 2 stretches are compositionally biased toward basic and acidic residues: residues Asp30 to Ala56 and Gln64 to Asn77.

Belongs to the UPF0337 (CsbD) family.

The sequence is that of UPF0337 protein CE0198 from Corynebacterium efficiens (strain DSM 44549 / YS-314 / AJ 12310 / JCM 11189 / NBRC 100395).